Reading from the N-terminus, the 252-residue chain is Sulfoacetaldehyde reductase 2 (252 aa).

6 to 30 (LITGATSGFGRAAARRFADAGWSLI) provides a ligand contact to NADP(+). Serine 139 lines the substrate pocket. Tyrosine 152 (proton acceptor) is an active-site residue.

The protein belongs to the short-chain dehydrogenases/reductases (SDR) family. As to quaternary structure, homodimer and heterotetramer.

The enzyme catalyses 2-hydroxyethane-1-sulfonate + NADP(+) = sulfoacetaldehyde + NADPH + H(+). The protein operates within organosulfur degradation. Functionally, catalyzes the formation of isethionate from 2-sulfoacetaldehyde in the deaminative pathway of taurine. Constitutively expressed enzyme that only mediates a small part of the activity observed in taurine-grown cells. In Chromohalobacter salexigens (strain ATCC BAA-138 / DSM 3043 / CIP 106854 / NCIMB 13768 / 1H11), this protein is Sulfoacetaldehyde reductase 2 (isfD2).